Here is a 281-residue protein sequence, read N- to C-terminus: Pre T-cell antigen receptor alpha (281 aa).

Residues 1–23 (MAGTWLLLLLALGCPALPTGVGG) form the signal peptide. Over 24 to 146 (TPFPSLAPPI…QEPLRGTPGG (123 aa)) the chain is Extracellular. A disulfide bond links cysteine 47 and cysteine 107. A glycan (N-linked (GlcNAc...) asparagine) is linked at asparagine 67. The chain crosses the membrane as a helical span at residues 147 to 167 (ALWLGVLRLLLFKLLLFDLLL). The Cytoplasmic portion of the chain corresponds to 168–281 (TCSCLCDPAG…LPPPLQAGAA (114 aa)). Positions 196–233 (LHPATETGGREATSSPRPQPRDRRWGDTPPGRKPGSPV) are disordered.

As to quaternary structure, heterodimer with TCRB; disulfide linked. This heterodimer assembles with CD3 proteins into a signaling-competent pre-T-cell receptor complex. Interacts with RHBDD1. As to expression, expressed in immature but not mature T-cells. Also found in CD34+ cells from peripheral blood, CD34+ precursors from umbilical cord blood and adult bone marrow.

The protein localises to the membrane. The protein resides in the cell membrane. In terms of biological role, component of the pre-T-cell receptor complex (composed of PTCRA, TCRB and the CD3 complex) that has a crucial role in early T-cell development, particularly alpha-beta T cell differentiation. This is Pre T-cell antigen receptor alpha from Homo sapiens (Human).